An 807-amino-acid polypeptide reads, in one-letter code: MTYRIKKWQKLSTITLLMAGVITLNGGEFRSVDKHQIAVADTNVQTPDYEKLRNTWLDVNYGYDKYDENNPDMKKKFDATEKEATNLLKEMKTESGRKYLWSGAETLETNSSHMTRTYRNIEKIAEAMRNPKTTLNTDENKKKVKDALEWLHKNAYGKEPDKKVKELSENFTKTTGKNTNLNWWDYEIGTPKSLTNTLILLNDQFSNEEKKKFTAPIKTFAPDSDKILSSVGKAELAKGGNLVDISKVKLLECIIEEDKDMMKKSIDSFNKVFTYVQDSATGKERNGFYKDGSYIDHQDVPYTGAYGVVLLEGISQMMPMIKETPFNDKTQNDTTLKSWIDDGFMPLIYKGEMMDLSRGRAISRENETSHSASATVMKSLLRLSDAMDDSTKAKYKKIVKSSVESDSSYKQNDYLNSYSDIDKMKSLMTDNSISKNGLTQQLKIYNDMDRVTYHNKDLDFAFGLSMTSKNVARYESINGENLKGWHTGAGMSYLYNSDVKHYHDNFWVTADMKRLSGTTTLDNEILKDTDDKKSSKTFVGGTKVDDQHASIGMDFENQDKTLTAKKSYFILNDKIVFLGTGIKSTDSSKNPVTTIENRKANGYTLYTDDKQTTNSDNQENNSVFLESTDTKKNIGYHFLNKPKITVKKESHTGKWKEINKSQKDTQKTDEYYEVTQKHSNSDNKYGYVLYPGLSKDVFKTKKDEVTVVKQEDDFHVVKDNESVWAGVNYSNSTQTFDINNTKVEVKAKGMFILKKKDDNTYECSFYNPESTNSASDIESKISMTGYSITNKNTSTSNESGVHFELTK.

An N-terminal signal peptide occupies residues 1-40; it reads MTYRIKKWQKLSTITLLMAGVITLNGGEFRSVDKHQIAVA. Catalysis depends on residues Asn241, His297, and Tyr306.

The protein belongs to the polysaccharide lyase 8 family.

Its subcellular location is the secreted. It carries out the reaction [hyaluronan](n) = n 3-(4-deoxy-beta-D-gluc-4-enuronosyl)-N-acetyl-D-glucosamine + H2O. The sequence is that of Hyaluronate lyase from Staphylococcus aureus (strain NCTC 8325 / PS 47).